We begin with the raw amino-acid sequence, 297 residues long: Trimeric intracellular cation channel type A (297 aa).

Topologically, residues 1–18 are lumenal; sequence MDLISSLSLGELALSFSR. Residues 19–39 form a helical membrane-spanning segment; it reads VPLFPVFDLSYFIVSIIYLKY. At 40–51 the chain is on the cytoplasmic side; that stretch reads EPGSVELSRRHP. Residues 52–72 traverse the membrane as a helical segment; sequence VASWLCAMLHCFGSYILADLL. Over 73-85 the chain is Lumenal; the sequence is LGEPIIDYFSNSS. Residue glycine 74 coordinates Ca(2+). The helical transmembrane segment at 86 to 106 threads the bilayer; it reads SILLASGVWYLIFFCPLDLFY. At 107–143 the chain is on the cytoplasmic side; the sequence is KCVCFLPVKLIFVAMKEVVRVRKIAVGIHHAHHYHHG. A 1,2-diacyl-sn-glycero-3-phospho-(1D-myo-inositol-4,5-bisphosphate) is bound by residues lysine 122 and arginine 126. Residues 144–164 traverse the membrane as a helical segment; sequence WFIMIATGWVKGSGVALLSNL. Topologically, residues 165–177 are lumenal; that stretch reads EQLLRGVWKPETN. The chain crosses the membrane as a helical span at residues 178–198; that stretch reads EILHMSFPTKASLYGAILFTL. Topologically, residues 199–208 are cytoplasmic; the sequence is QQTRWLPVSK. Residues 209-229 traverse the membrane as a helical segment; the sequence is ASLIFVFTMFMVSCKVFLTAT. Topologically, residues 230-233 are lumenal; sequence HSHS. The chain crosses the membrane as a helical span at residues 234-254; that stretch reads SPFDVLEGYICPVLFGATWGG. Topologically, residues 255–297 are cytoplasmic; it reads DHHHDNHGAPHGMGLGTQHSGLPAKAKEELSEGFRKKKTKKAD. The tract at residues 259 to 297 is disordered; it reads DNHGAPHGMGLGTQHSGLPAKAKEELSEGFRKKKTKKAD. Residues 279 to 288 are compositionally biased toward basic and acidic residues; sequence KAKEELSEGF.

This sequence belongs to the TMEM38 family. Homotrimer; conformation seems to be controled by binding to diacylglycerol (DAG).

It is found in the sarcoplasmic reticulum membrane. The protein resides in the nucleus membrane. It catalyses the reaction K(+)(in) = K(+)(out). Its activity is regulated as follows. Channel activity is activated by a change of voltage within the sarcoplasmic reticulum lumen and blocked by luminal high Ca(2+) levels. Functionally, intracellular monovalent cation channel required for maintenance of rapid intracellular calcium release. Acts as a potassium counter-ion channel that functions in synchronization with calcium release from intracellular stores. Opened by a change of voltage within the sarcoplasmic reticulum lumen. This Rattus norvegicus (Rat) protein is Trimeric intracellular cation channel type A.